A 331-amino-acid polypeptide reads, in one-letter code: E3 ubiquitin-protein ligase Siah2 (331 aa).

Positions M1–G26 are disordered. The span at G9–G26 shows a compositional bias: gly residues. Residues C89–R124 form an RING-type zinc finger. Residues V139–C331 form an SBD region. An SIAH-type zinc finger spans residues T142 to K202. Residues C147, C154, H166, C170, C177, C184, H196, and H201 each coordinate Zn(2+).

It belongs to the SINA (Seven in absentia) family. In terms of assembly, homodimer. In terms of tissue distribution, in embryos it is expressed in all blastomeres starting at the mid-blastulla. After 20 somite stage, it is expressed mainly in the posterior part. Expressed in brain, including the eye, the cranial cavity, otic vesicle, optic chiasm and in the gut.

It carries out the reaction S-ubiquitinyl-[E2 ubiquitin-conjugating enzyme]-L-cysteine + [acceptor protein]-L-lysine = [E2 ubiquitin-conjugating enzyme]-L-cysteine + N(6)-ubiquitinyl-[acceptor protein]-L-lysine.. It participates in protein modification; protein ubiquitination. Its function is as follows. E3 ubiquitin-protein ligase that mediates ubiquitination and subsequent proteasomal degradation of target proteins. E3 ubiquitin ligases accept ubiquitin from an E2 ubiquitin-conjugating enzyme in the form of a thioester and then directly transfers the ubiquitin to targeted substrates. It probably triggers the ubiquitin-mediated degradation of different substrates. Induces cellular growth arrest by inhibiting the G2/M transition. May play a role in the regulation of the cellular clock function. The protein is E3 ubiquitin-protein ligase Siah2 (siah2l) of Danio rerio (Zebrafish).